The chain runs to 3380 residues: Apolipophorins (3380 aa).

A signal peptide spans 1 to 21 (MGTPPHIWFLLILAISSGGLS). One can recognise a Vitellogenin domain in the interval 40–646 (YQKGQTYTYS…SQSSYLPRSV (607 aa)). N-linked (GlcNAc...) asparagine glycans are attached at residues N132, N649, N969, N2174, N2851, and N3177. The 165-residue stretch at 2815-2979 (ATAILLNSHH…NAWKVDAQCA (165 aa)) folds into the VWFD domain. A disulfide bridge connects residues C2839 and C2978.

Cleaved into 2 chains by furin protease. However, prevention of cleavage does not impair its function. In terms of processing, N-glycosylated. As to expression, present in brain, hemolymph, fat body and eyes.

The protein localises to the secreted. Constitutes the major component of lipophorin, which mediates transport for various types of lipids in hemolymph. Acts by forming lipoprotein particles that bind lipoproteins and lipids. May be required for morphogens wingless (wg) and hedgehog (hh) function, possibly by acting as vehicles for the movement of wg and hh. The protein is Apolipophorins of Locusta migratoria (Migratory locust).